Reading from the N-terminus, the 107-residue chain is Large ribosomal subunit protein P1 (107 aa).

The span at 67–82 shows a compositional bias: low complexity; the sequence is PTATSAAAAPAAGEAS. The segment at 67 to 107 is disordered; it reads PTATSAAAAPAAGEASGKAEEKKKEEPEEEGDDDMGFGLFD. Over residues 83 to 92 the composition is skewed to basic and acidic residues; that stretch reads GKAEEKKKEE.

Belongs to the eukaryotic ribosomal protein P1/P2 family. In terms of assembly, P1 and P2 exist as dimers at the large ribosomal subunit.

Plays an important role in the elongation step of protein synthesis. The chain is Large ribosomal subunit protein P1 from Leishmania peruviana.